Reading from the N-terminus, the 131-residue chain is D-ribose pyranase (131 aa).

Residue histidine 20 is the Proton donor of the active site. Residues aspartate 28, histidine 98, and 120 to 122 (YSN) each bind substrate.

It belongs to the RbsD / FucU family. RbsD subfamily. In terms of assembly, homodecamer.

The protein localises to the cytoplasm. The catalysed reaction is beta-D-ribopyranose = beta-D-ribofuranose. Its pathway is carbohydrate metabolism; D-ribose degradation; D-ribose 5-phosphate from beta-D-ribopyranose: step 1/2. Functionally, catalyzes the interconversion of beta-pyran and beta-furan forms of D-ribose. This chain is D-ribose pyranase, found in Lactobacillus johnsonii (strain CNCM I-12250 / La1 / NCC 533).